Consider the following 286-residue polypeptide: Ribosomal RNA small subunit methyltransferase A (286 aa).

The S-adenosyl-L-methionine site is built by Asn-28, Leu-30, Gly-55, Glu-77, Asp-103, and Asn-123.

Belongs to the class I-like SAM-binding methyltransferase superfamily. rRNA adenine N(6)-methyltransferase family. RsmA subfamily.

The protein resides in the cytoplasm. The enzyme catalyses adenosine(1518)/adenosine(1519) in 16S rRNA + 4 S-adenosyl-L-methionine = N(6)-dimethyladenosine(1518)/N(6)-dimethyladenosine(1519) in 16S rRNA + 4 S-adenosyl-L-homocysteine + 4 H(+). Its function is as follows. Specifically dimethylates two adjacent adenosines (A1518 and A1519) in the loop of a conserved hairpin near the 3'-end of 16S rRNA in the 30S particle. May play a critical role in biogenesis of 30S subunits. This is Ribosomal RNA small subunit methyltransferase A from Bradyrhizobium sp. (strain ORS 278).